The sequence spans 260 residues: Exosome complex component Rrp42 (260 aa).

It belongs to the RNase PH family. Rrp42 subfamily. Component of the archaeal exosome complex. Forms a hexameric ring-like arrangement composed of 3 Rrp41-Rrp42 heterodimers. The hexameric ring associates with a trimer of Rrp4 and/or Csl4 subunits.

It is found in the cytoplasm. Non-catalytic component of the exosome, which is a complex involved in RNA degradation. Contributes to the structuring of the Rrp41 active site. The chain is Exosome complex component Rrp42 from Thermoplasma acidophilum (strain ATCC 25905 / DSM 1728 / JCM 9062 / NBRC 15155 / AMRC-C165).